The following is a 73-amino-acid chain: Putative membrane protein insertion efficiency factor (73 aa).

The protein belongs to the UPF0161 family.

It is found in the cell inner membrane. Its function is as follows. Could be involved in insertion of integral membrane proteins into the membrane. This Phocaeicola vulgatus (strain ATCC 8482 / DSM 1447 / JCM 5826 / CCUG 4940 / NBRC 14291 / NCTC 11154) (Bacteroides vulgatus) protein is Putative membrane protein insertion efficiency factor.